Consider the following 205-residue polypeptide: Putative 3-methyladenine DNA glycosylase (205 aa).

Belongs to the DNA glycosylase MPG family.

The polypeptide is Putative 3-methyladenine DNA glycosylase (Bacillus cereus (strain G9842)).